We begin with the raw amino-acid sequence, 42 residues long: Statherin (42 aa).

Positions 1 to 6 (DSSEEK) are hydroxyapatite-binding; inhibits crystal growth. Ser-2 and Ser-3 each carry phosphoserine. The segment at 18 to 42 (RYGPYQPFVPPPLYPQPYQPYQPQY) is disordered. The segment at 18 to 42 (RYGPYQPFVPPPLYPQPYQPYQPQY) is hydrophobic; inhibits precipitation of calcium phosphate salts. Residues 24-42 (PFVPPPLYPQPYQPYQPQY) are compositionally biased toward pro residues.

The protein belongs to the histatin/statherin family. Secreted by parotid and submandibular glands.

The protein resides in the secreted. Its function is as follows. Salivary protein that stabilizes saliva supersaturated with calcium salts by inhibiting the precipitation of calcium phosphate salts. It also modulates hydroxyapatite crystal formation on the tooth surface. This is Statherin (STATH) from Macaca arctoides (Stump-tailed macaque).